The chain runs to 156 residues: Biotin carboxyl carrier protein of acetyl-CoA carboxylase (156 aa).

A Biotinyl-binding domain is found at 80-156 (GNVVRSPMVG…EFDQPLFTIV (77 aa)). N6-biotinyllysine is present on Lys-122.

In terms of assembly, homodimer.

Its pathway is lipid metabolism; fatty acid biosynthesis. In terms of biological role, this protein is a component of the acetyl coenzyme A carboxylase complex; first, biotin carboxylase catalyzes the carboxylation of the carrier protein and then the transcarboxylase transfers the carboxyl group to form malonyl-CoA. The chain is Biotin carboxyl carrier protein of acetyl-CoA carboxylase (accB) from Pseudomonas aeruginosa (strain ATCC 15692 / DSM 22644 / CIP 104116 / JCM 14847 / LMG 12228 / 1C / PRS 101 / PAO1).